The following is a 203-amino-acid chain: Small ribosomal subunit protein uS4 (203 aa).

The S4 RNA-binding domain maps to 93–156 (RRLDNVVYRL…MKVPAILEAV (64 aa)).

It belongs to the universal ribosomal protein uS4 family. In terms of assembly, part of the 30S ribosomal subunit. Contacts protein S5. The interaction surface between S4 and S5 is involved in control of translational fidelity.

In terms of biological role, one of the primary rRNA binding proteins, it binds directly to 16S rRNA where it nucleates assembly of the body of the 30S subunit. Functionally, with S5 and S12 plays an important role in translational accuracy. The protein is Small ribosomal subunit protein uS4 of Streptococcus equi subsp. equi (strain 4047).